The primary structure comprises 148 residues: uncharacterized protein (148 aa).

A run of 4 helical transmembrane segments spans residues 29 to 49 (FSLV…AAKE), 61 to 81 (PIIL…PLVM), 99 to 119 (FIVF…NGFL), and 121 to 141 (ILVS…TLCI).

The protein resides in the cell membrane. This is an uncharacterized protein from Bacillus subtilis (strain 168).